A 186-amino-acid chain; its full sequence is Peptidyl-tRNA hydrolase (186 aa).

Residue tyrosine 13 coordinates tRNA. The Proton acceptor role is filled by histidine 18. Tyrosine 59, asparagine 61, and asparagine 107 together coordinate tRNA.

It belongs to the PTH family. As to quaternary structure, monomer.

The protein localises to the cytoplasm. The catalysed reaction is an N-acyl-L-alpha-aminoacyl-tRNA + H2O = an N-acyl-L-amino acid + a tRNA + H(+). In terms of biological role, hydrolyzes ribosome-free peptidyl-tRNAs (with 1 or more amino acids incorporated), which drop off the ribosome during protein synthesis, or as a result of ribosome stalling. Its function is as follows. Catalyzes the release of premature peptidyl moieties from peptidyl-tRNA molecules trapped in stalled 50S ribosomal subunits, and thus maintains levels of free tRNAs and 50S ribosomes. This is Peptidyl-tRNA hydrolase from Thermotoga sp. (strain RQ2).